The primary structure comprises 496 residues: Glutamyl-tRNA(Gln) amidotransferase subunit A (496 aa).

Catalysis depends on charge relay system residues Lys75 and Ser150. The active-site Acyl-ester intermediate is Ser174.

Belongs to the amidase family. GatA subfamily. Heterotrimer of A, B and C subunits.

The catalysed reaction is L-glutamyl-tRNA(Gln) + L-glutamine + ATP + H2O = L-glutaminyl-tRNA(Gln) + L-glutamate + ADP + phosphate + H(+). Its function is as follows. Allows the formation of correctly charged Gln-tRNA(Gln) through the transamidation of misacylated Glu-tRNA(Gln) in organisms which lack glutaminyl-tRNA synthetase. The reaction takes place in the presence of glutamine and ATP through an activated gamma-phospho-Glu-tRNA(Gln). The protein is Glutamyl-tRNA(Gln) amidotransferase subunit A of Burkholderia mallei (strain NCTC 10247).